The chain runs to 232 residues: Orotidine 5'-phosphate decarboxylase (232 aa).

Residues D12, K34, 61–70 (DMKLLDIDNT), T116, R177, Q186, G206, and R207 contribute to the substrate site. The active-site Proton donor is the K63.

It belongs to the OMP decarboxylase family. Type 1 subfamily. As to quaternary structure, homodimer.

It carries out the reaction orotidine 5'-phosphate + H(+) = UMP + CO2. It participates in pyrimidine metabolism; UMP biosynthesis via de novo pathway; UMP from orotate: step 2/2. In terms of biological role, catalyzes the decarboxylation of orotidine 5'-monophosphate (OMP) to uridine 5'-monophosphate (UMP). The polypeptide is Orotidine 5'-phosphate decarboxylase (Sinorhizobium medicae (strain WSM419) (Ensifer medicae)).